Reading from the N-terminus, the 252-residue chain is Imidazole glycerol phosphate synthase subunit HisF (252 aa).

Residues D11 and D130 contribute to the active site.

This sequence belongs to the HisA/HisF family. As to quaternary structure, heterodimer of HisH and HisF.

The protein localises to the cytoplasm. The enzyme catalyses 5-[(5-phospho-1-deoxy-D-ribulos-1-ylimino)methylamino]-1-(5-phospho-beta-D-ribosyl)imidazole-4-carboxamide + L-glutamine = D-erythro-1-(imidazol-4-yl)glycerol 3-phosphate + 5-amino-1-(5-phospho-beta-D-ribosyl)imidazole-4-carboxamide + L-glutamate + H(+). Its pathway is amino-acid biosynthesis; L-histidine biosynthesis; L-histidine from 5-phospho-alpha-D-ribose 1-diphosphate: step 5/9. Its function is as follows. IGPS catalyzes the conversion of PRFAR and glutamine to IGP, AICAR and glutamate. The HisF subunit catalyzes the cyclization activity that produces IGP and AICAR from PRFAR using the ammonia provided by the HisH subunit. The chain is Imidazole glycerol phosphate synthase subunit HisF from Staphylococcus saprophyticus subsp. saprophyticus (strain ATCC 15305 / DSM 20229 / NCIMB 8711 / NCTC 7292 / S-41).